The following is a 352-amino-acid chain: N-acetyl-gamma-glutamyl-phosphate reductase (352 aa).

Cys-155 is an active-site residue.

This sequence belongs to the NAGSA dehydrogenase family. Type 1 subfamily.

It localises to the cytoplasm. It carries out the reaction N-acetyl-L-glutamate 5-semialdehyde + phosphate + NADP(+) = N-acetyl-L-glutamyl 5-phosphate + NADPH + H(+). The protein operates within amino-acid biosynthesis; L-arginine biosynthesis; N(2)-acetyl-L-ornithine from L-glutamate: step 3/4. Functionally, catalyzes the NADPH-dependent reduction of N-acetyl-5-glutamyl phosphate to yield N-acetyl-L-glutamate 5-semialdehyde. The chain is N-acetyl-gamma-glutamyl-phosphate reductase from Acaryochloris marina (strain MBIC 11017).